A 331-amino-acid chain; its full sequence is Biotin synthase (331 aa).

The region spanning 53–272 (NHVETASLLS…LATARVMMPR (220 aa)) is the Radical SAM core domain. Positions 68, 72, and 75 each coordinate [4Fe-4S] cluster. Cys112, Cys143, Cys203, and Arg276 together coordinate [2Fe-2S] cluster.

Belongs to the radical SAM superfamily. Biotin synthase family. As to quaternary structure, homodimer. [4Fe-4S] cluster serves as cofactor. The cofactor is [2Fe-2S] cluster.

It catalyses the reaction (4R,5S)-dethiobiotin + (sulfur carrier)-SH + 2 reduced [2Fe-2S]-[ferredoxin] + 2 S-adenosyl-L-methionine = (sulfur carrier)-H + biotin + 2 5'-deoxyadenosine + 2 L-methionine + 2 oxidized [2Fe-2S]-[ferredoxin]. It functions in the pathway cofactor biosynthesis; biotin biosynthesis; biotin from 7,8-diaminononanoate: step 2/2. In terms of biological role, catalyzes the conversion of dethiobiotin (DTB) to biotin by the insertion of a sulfur atom into dethiobiotin via a radical-based mechanism. The protein is Biotin synthase of Bradyrhizobium diazoefficiens (strain JCM 10833 / BCRC 13528 / IAM 13628 / NBRC 14792 / USDA 110).